A 686-amino-acid polypeptide reads, in one-letter code: Disintegrin and metalloproteinase domain-containing protein 17 homolog (686 aa).

A signal peptide spans 1-21 (MKIQDRSLLIFLVLGILKSDA). The propeptide occupies 22–177 (FNTRVKRHAP…RRAIAIPSDR (156 aa)). N-linked (GlcNAc...) asparagine glycosylation is found at N59, N206, and N262. At 178–637 (RKDVLNVKRN…TGGVLEFIKT (460 aa)) the chain is on the extracellular side. One can recognise a Peptidase M12B domain in the interval 187 to 445 (NRCTLKLVAD…KWESCFQEEM (259 aa)). 2 cysteine pairs are disulfide-bonded: C328–C440 and C394–C424. H370 contacts Zn(2+). E371 is a catalytic residue. Zn(2+) contacts are provided by H374 and H380. The Disintegrin domain maps to 446–535 (TSFCGNGIVE…ECPSAPPVRD (90 aa)). N-linked (GlcNAc...) asparagine glycosylation is present at N501. C506 and C527 are disulfide-bonded. Residue N581 is glycosylated (N-linked (GlcNAc...) asparagine). The chain crosses the membrane as a helical span at residues 638-658 (HIVVIAIIFFTLIFVGIYKIV). At 659-686 (KYGENFTEKVTHKTAGGCRSVFVKADVN) the chain is on the cytoplasmic side.

It depends on Zn(2+) as a cofactor.

It localises to the cell membrane. Functionally, metalloprotease. Acts together with protease sup-17 to facilitate lin-12/Notch signaling during developmental cell fate decision, including anchor cell/ventral uterine precursor cell decision. By modulating glp-1/Notch signaling, plays a role in germline development. The chain is Disintegrin and metalloproteinase domain-containing protein 17 homolog from Caenorhabditis elegans.